A 1006-amino-acid chain; its full sequence is Probable beta-galactosidase A (1006 aa).

The signal sequence occupies residues 1 to 18 (MKLLSVCAIALLAAQAAG). The substrate site is built by Tyr-96, Asn-140, Ala-141, and Glu-142. Residue Asn-156 is glycosylated (N-linked (GlcNAc...) asparagine). Asn-199 is a substrate binding site. Glu-200 acts as the Proton donor in catalysis. A disulfide bridge connects residues Cys-205 and Cys-206. A substrate-binding site is contributed by Tyr-260. Cysteines 266 and 315 form a disulfide. The active-site Nucleophile is Glu-298. Tyr-364 lines the substrate pocket. Asn-373, Asn-402, Asn-422, Asn-622, Asn-760, Asn-777, and Asn-914 each carry an N-linked (GlcNAc...) asparagine glycan.

The protein belongs to the glycosyl hydrolase 35 family.

Its subcellular location is the secreted. The enzyme catalyses Hydrolysis of terminal non-reducing beta-D-galactose residues in beta-D-galactosides.. Cleaves beta-linked terminal galactosyl residues from gangliosides, glycoproteins, and glycosaminoglycans. This Aspergillus fumigatus (strain CBS 144.89 / FGSC A1163 / CEA10) (Neosartorya fumigata) protein is Probable beta-galactosidase A (lacA).